A 114-amino-acid polypeptide reads, in one-letter code: MATLFDQAKLMARELQDSDEFKQLSTALAKVRADQEANSAFHDFQVAQKEIQELQSKGEEPKPEQIQRWQTTAQKAQQLKPIKDLSVVEQNLNNMLGEVNEIITAPLNELYLNN.

Belongs to the UPF0342 family.

This is UPF0342 protein OEOE_0901 from Oenococcus oeni (strain ATCC BAA-331 / PSU-1).